The chain runs to 253 residues: Neurotrophin-3 (253 aa).

A signal peptide spans 1–18; it reads MSILFYVMFLAYLRGVQG. Residues 19–134 constitute a propeptide that is removed on maturation; that stretch reads NSMDQRSLPE…AANRTSRRKR (116 aa). Positions 62-89 are disordered; sequence TLPKAEAPPREPAKSEFQPVTAMGPELL. N-linked (GlcNAc...) asparagine glycosylation occurs at asparagine 127. Intrachain disulfides connect cysteine 148-cysteine 213, cysteine 191-cysteine 242, and cysteine 201-cysteine 244.

Belongs to the NGF-beta family.

It localises to the secreted. Its function is as follows. Seems to promote the survival of visceral and proprioceptive sensory neurons. The sequence is that of Neurotrophin-3 (NTF3) from Bos taurus (Bovine).